The sequence spans 371 residues: DNA replication and repair protein RecF (371 aa).

Position 30–37 (30–37 (GENAQGKT)) interacts with ATP.

It belongs to the RecF family.

The protein localises to the cytoplasm. Functionally, the RecF protein is involved in DNA metabolism; it is required for DNA replication and normal SOS inducibility. RecF binds preferentially to single-stranded, linear DNA. It also seems to bind ATP. This is DNA replication and repair protein RecF from Staphylococcus epidermidis (strain ATCC 12228 / FDA PCI 1200).